The sequence spans 183 residues: Ribulose bisphosphate carboxylase small subunit, chloroplastic 1 (183 aa).

The transit peptide at 1-58 (MASSMLSNAAMATTAATAGAQASMVAPFNGLKSFATFPITKKSSNDFSSLPSNGGRVQ) directs the protein to the chloroplast.

The protein belongs to the RuBisCO small chain family. In terms of assembly, heterohexadecamer of 8 large and 8 small subunits.

The protein localises to the plastid. Its subcellular location is the chloroplast. Functionally, ruBisCO catalyzes two reactions: the carboxylation of D-ribulose 1,5-bisphosphate, the primary event in carbon dioxide fixation, as well as the oxidative fragmentation of the pentose substrate. Both reactions occur simultaneously and in competition at the same active site. Although the small subunit is not catalytic it is essential for maximal activity. The polypeptide is Ribulose bisphosphate carboxylase small subunit, chloroplastic 1 (Amaranthus hypochondriacus (Prince-of-Wales feather)).